The primary structure comprises 60 residues: Sperm protamine P1 (60 aa).

The segment at methionine 1–tyrosine 60 is disordered.

The protein belongs to the protamine P1 family. Testis.

It localises to the nucleus. It is found in the chromosome. Its function is as follows. Protamines substitute for histones in the chromatin of sperm during the haploid phase of spermatogenesis. They compact sperm DNA into a highly condensed, stable and inactive complex. The protein is Sperm protamine P1 (PRM1) of Osphranter rufus (Red kangaroo).